A 408-amino-acid polypeptide reads, in one-letter code: MRGGLWQLGQSITRRLANGGDKKAVARRCFATESELKKTVLYDFHVAHGGKMVPFAGWSMPIQYKDSIMDSTLNCRQNGSLFDVSHMCGLSLKGKDVVSFLEKLVIADVAALAHGTGTLTVFTNEKGGAIDDSVITKVTDDHLYLVVNAGCRDKDLAHIEEHMKAFKAKGGDVSWHIHDERSLLALQGPLAAPVLQHLTKEDLSKLYFGEFRVLDINGSQCFLTRTGYTGEDGFEISVPSEHGVELAKALLEKSEGKIRLTGLGARDSLRLEAGLCLYGNDLEQHITPIEAGLTWAIGKRRRAEGGFLGADVILKQLADGPSIRRVGFISSGPPPRSHSEIQDEGGNNIGEVTSGGFSPCLKKNIAIGYVKSGLHKAGTKVKIIIRGKQNEGVVTKMPFVPTKYYKPS.

A mitochondrion-targeting transit peptide spans 1–30; the sequence is MRGGLWQLGQSITRRLANGGDKKAVARRCF. The substrate site is built by glutamate 235, arginine 266, and tyrosine 404.

This sequence belongs to the GcvT family. The glycine cleavage system is composed of four proteins: P, T, L and H.

It localises to the mitochondrion. The enzyme catalyses N(6)-[(R)-S(8)-aminomethyldihydrolipoyl]-L-lysyl-[protein] + (6S)-5,6,7,8-tetrahydrofolate = N(6)-[(R)-dihydrolipoyl]-L-lysyl-[protein] + (6R)-5,10-methylene-5,6,7,8-tetrahydrofolate + NH4(+). The glycine cleavage system catalyzes the degradation of glycine. The polypeptide is Aminomethyltransferase, mitochondrial (GDCST) (Pisum sativum (Garden pea)).